The sequence spans 347 residues: Dihydroorotate dehydrogenase (quinone) (347 aa).

FMN-binding positions include 65–69 (AGLDK) and Thr89. Lys69 serves as a coordination point for substrate. Residue 114–118 (NRMGF) participates in substrate binding. The FMN site is built by Asn146 and Asn179. Asn179 is a substrate binding site. Ser182 acts as the Nucleophile in catalysis. Asn184 contributes to the substrate binding site. FMN-binding residues include Lys224 and Thr252. 253–254 (NT) provides a ligand contact to substrate. FMN contacts are provided by residues Gly275, Gly304, and 325–326 (YT).

This sequence belongs to the dihydroorotate dehydrogenase family. Type 2 subfamily. As to quaternary structure, monomer. It depends on FMN as a cofactor.

It is found in the cell membrane. The catalysed reaction is (S)-dihydroorotate + a quinone = orotate + a quinol. It participates in pyrimidine metabolism; UMP biosynthesis via de novo pathway; orotate from (S)-dihydroorotate (quinone route): step 1/1. Functionally, catalyzes the conversion of dihydroorotate to orotate with quinone as electron acceptor. The sequence is that of Dihydroorotate dehydrogenase (quinone) from Herminiimonas arsenicoxydans.